We begin with the raw amino-acid sequence, 141 residues long: Hemoglobin subunit beta-C (141 aa).

Residues 1 to 141 enclose the Globin domain; the sequence is PNKALITGFW…VASALAHRYH (141 aa). The heme b site is built by His-58 and His-87.

Belongs to the globin family. Heterotetramer of two alpha chains and two beta chains. In terms of tissue distribution, red blood cells.

Functionally, involved in oxygen transport from the lung to the various peripheral tissues. This chain is Hemoglobin subunit beta-C, found in Ammotragus lervia (Barbary sheep).